The primary structure comprises 95 residues: UPF0235 protein PTH_1821 (95 aa).

Belongs to the UPF0235 family.

The polypeptide is UPF0235 protein PTH_1821 (Pelotomaculum thermopropionicum (strain DSM 13744 / JCM 10971 / SI)).